The sequence spans 549 residues: Glucose-6-phosphate isomerase (549 aa).

The Proton donor role is filled by E355. Residues H387 and K515 contribute to the active site.

The protein belongs to the GPI family.

The protein localises to the cytoplasm. The enzyme catalyses alpha-D-glucose 6-phosphate = beta-D-fructose 6-phosphate. Its pathway is carbohydrate biosynthesis; gluconeogenesis. It functions in the pathway carbohydrate degradation; glycolysis; D-glyceraldehyde 3-phosphate and glycerone phosphate from D-glucose: step 2/4. In terms of biological role, catalyzes the reversible isomerization of glucose-6-phosphate to fructose-6-phosphate. In Haemophilus influenzae (strain 86-028NP), this protein is Glucose-6-phosphate isomerase.